The following is a 168-amino-acid chain: MATATYPPPPPYYRLYKDFSENTDSAPEPPPPIEGTYVCFGGNYTTEDVLPSLEEQGVPQLYPKDSNLDYKKELRSLNRELQLHILELADVLVDRPSQYAKRIGEISSIFKNLHHLLNSLRPHQARATLIHIMELQIQQRKQAVEDIKRRREEAQGLLKDAFVTLDGQ.

Over residues 1–12 the composition is skewed to pro residues; that stretch reads MATATYPPPPPY. Residues 1 to 33 form a disordered region; the sequence is MATATYPPPPPYYRLYKDFSENTDSAPEPPPPI. 2 coiled-coil regions span residues 64-92 and 132-162; these read KDSNLDYKKELRSLNRELQLHILELADVL and IMELQIQQRKQAVEDIKRRREEAQGLLKDAF.

The protein belongs to the Mediator complex subunit 7 family. Component of the Mediator complex. Interacts with MEE14/CBP1.

It is found in the nucleus. Its function is as follows. Component of the Mediator complex, a coactivator involved in the regulated transcription of nearly all RNA polymerase II-dependent genes. Mediator functions as a bridge to convey information from gene-specific regulatory proteins to the basal RNA polymerase II transcription machinery. The Mediator complex, having a compact conformation in its free form, is recruited to promoters by direct interactions with regulatory proteins and serves for the assembly of a functional pre-initiation complex with RNA polymerase II and the general transcription factors. The protein is Mediator of RNA polymerase II transcription subunit 7b (MED7B) of Arabidopsis thaliana (Mouse-ear cress).